The following is a 191-amino-acid chain: Protein Ves (191 aa).

The protein belongs to the Ves family.

The protein is Protein Ves of Escherichia coli (strain SE11).